The sequence spans 169 residues: S-ribosylhomocysteine lyase (169 aa).

H54, H58, and C129 together coordinate Fe cation.

Belongs to the LuxS family. In terms of assembly, homodimer. It depends on Fe cation as a cofactor.

The catalysed reaction is S-(5-deoxy-D-ribos-5-yl)-L-homocysteine = (S)-4,5-dihydroxypentane-2,3-dione + L-homocysteine. Functionally, involved in the synthesis of autoinducer 2 (AI-2) which is secreted by bacteria and is used to communicate both the cell density and the metabolic potential of the environment. The regulation of gene expression in response to changes in cell density is called quorum sensing. Catalyzes the transformation of S-ribosylhomocysteine (RHC) to homocysteine (HC) and 4,5-dihydroxy-2,3-pentadione (DPD). The sequence is that of S-ribosylhomocysteine lyase from Glaesserella parasuis serovar 5 (strain SH0165) (Haemophilus parasuis).